We begin with the raw amino-acid sequence, 497 residues long: Cytochrome P450 71A20 (497 aa).

A helical transmembrane segment spans residues 3–23 (MILITLCLTTLLALLLKSILK). Residue C440 participates in heme binding.

Belongs to the cytochrome P450 family. It depends on heme as a cofactor.

It is found in the membrane. The protein is Cytochrome P450 71A20 (CYP71A20) of Arabidopsis thaliana (Mouse-ear cress).